The primary structure comprises 347 residues: CCN family member 2 (347 aa).

The first 24 residues, 1–24 (MLASVAGPVSLALVLLLCTRPATG), serve as a signal peptide directing secretion. In terms of domain architecture, IGFBP N-terminal spans 25–96 (QDCSAQCQCA…NRKIGVCTAK (72 aa)). Intrachain disulfides connect cysteine 27/cysteine 52, cysteine 31/cysteine 54, cysteine 33/cysteine 55, cysteine 41/cysteine 58, cysteine 66/cysteine 80, and cysteine 72/cysteine 93. In terms of domain architecture, VWFC spans 99–165 (APCVFGGSVY…GKCCEEWVCD (67 aa)). One can recognise a TSP type-1 domain in the interval 196-241 (NCLVQTTEWSACSKTCGMGISTRVTNDNTFCRLEKQSRLCMVRPCE). Positions 245–347 (EENIKKGKKC…YYRKMYGDMA (103 aa)) are heparin-binding. 5 disulfide bridges follow: cysteine 254–cysteine 291, cysteine 271–cysteine 305, cysteine 282–cysteine 321, cysteine 285–cysteine 323, and cysteine 290–cysteine 327. A CTCK domain is found at 254–328 (CIRTPKIAKP…KTCACHYNCP (75 aa)).

It belongs to the CCN family. Monomer. Interacts with TSKU.

Its subcellular location is the secreted. The protein resides in the extracellular space. It is found in the extracellular matrix. Its function is as follows. Major connective tissue mitoattractant secreted by vascular endothelial cells. Promotes proliferation and differentiation of chondrocytes. Is involved in the stimulation of osteoblast differentiation and has a critical role in osteogenesis. Mediates heparin- and divalent cation-dependent cell adhesion in many cell types including fibroblasts, myofibroblasts, endothelial and epithelial cells. Enhances fibroblast growth factor-induced DNA synthesis. This Rattus norvegicus (Rat) protein is CCN family member 2.